We begin with the raw amino-acid sequence, 227 residues long: Large ribosomal subunit protein uL1 (227 aa).

The protein belongs to the universal ribosomal protein uL1 family. In terms of assembly, part of the 50S ribosomal subunit.

Binds directly to 23S rRNA. The L1 stalk is quite mobile in the ribosome, and is involved in E site tRNA release. In terms of biological role, protein L1 is also a translational repressor protein, it controls the translation of the L11 operon by binding to its mRNA. The chain is Large ribosomal subunit protein uL1 from Tropheryma whipplei (strain TW08/27) (Whipple's bacillus).